The sequence spans 315 residues: Atrochrysone carboxyl ACP thioesterase (315 aa).

Residues His95, His97, Asp99, and His100 each coordinate Zn(2+). Asp99 acts as the Proton donor/acceptor in catalysis.

Belongs to the metallo-beta-lactamase superfamily. Requires Zn(2+) as cofactor. Endocrocin is specifically produced in conidia.

It catalyses the reaction atrochrysone carboxyl-[ACP] + H2O = atrochrysone carboxylate + holo-[ACP] + H(+). Functionally, atrochrysone carboxyl ACP thioesterase; part of the gene cluster that mediates the biosynthesis of endocrocin, a simple anthraquinone interesting for many biotechnological applications. The pathway begins with the synthesis of atrochrysone thioester by the polyketide synthase (PKS) encA. The atrochrysone carboxyl ACP thioesterase encB then breaks the thioester bond and releases the atrochrysone carboxylic acid from encA. The atrochrysone carboxylic acid is then converted to endocrocin anthrone which is further oxidized into endocrocin by the anthrone oxygenase encC. The exact function of encD has not been identified yet, but it negatively regulates endocrocin production, likely through the modification of endocrocin itself. This is Atrochrysone carboxyl ACP thioesterase from Aspergillus fumigatus (strain ATCC MYA-4609 / CBS 101355 / FGSC A1100 / Af293) (Neosartorya fumigata).